The chain runs to 220 residues: Riboflavin kinase (220 aa).

The tract at residues 1-92 (MDTSDQYYRA…LSRILSIKSN (92 aa)) is H-T-H motif-like. The riboflavin kinase stretch occupies residues 93–220 (IVMTGIVVPG…GDEVTIEVTA (128 aa)). A CDP-binding site is contributed by 102–107 (GMGEGK). Threonine 131 and asparagine 133 together coordinate Mg(2+). FMN is bound by residues threonine 188 and glutamate 195. 200–203 (KYLR) contacts CDP.

This sequence belongs to the archaeal riboflavin kinase family. Mg(2+) is required as a cofactor.

It catalyses the reaction riboflavin + CTP = CDP + FMN + H(+). The protein operates within cofactor biosynthesis; FMN biosynthesis; FMN from riboflavin (CTP route): step 1/1. Its function is as follows. Catalyzes the CTP-dependent phosphorylation of riboflavin (vitamin B2) to form flavin mononucleotide (FMN). This chain is Riboflavin kinase (ribK), found in Thermoplasma volcanium (strain ATCC 51530 / DSM 4299 / JCM 9571 / NBRC 15438 / GSS1).